A 530-amino-acid polypeptide reads, in one-letter code: Autoinducer-2 kinase (530 aa).

This sequence belongs to the FGGY kinase family.

The protein localises to the cytoplasm. It catalyses the reaction (S)-4,5-dihydroxypentane-2,3-dione + ATP = (2S)-2-hydroxy-3,4-dioxopentyl phosphate + ADP + H(+). In terms of biological role, catalyzes the phosphorylation of autoinducer-2 (AI-2) to phospho-AI-2, which subsequently inactivates the transcriptional regulator LsrR and leads to the transcription of the lsr operon. Phosphorylates the ring-open form of (S)-4,5-dihydroxypentane-2,3-dione (DPD), which is the precursor to all AI-2 signaling molecules, at the C5 position. The sequence is that of Autoinducer-2 kinase from Salmonella paratyphi A (strain ATCC 9150 / SARB42).